Consider the following 90-residue polypeptide: Small ribosomal subunit protein uS15 (90 aa).

This sequence belongs to the universal ribosomal protein uS15 family. As to quaternary structure, part of the 30S ribosomal subunit. Forms a bridge to the 50S subunit in the 70S ribosome, contacting the 23S rRNA.

Its function is as follows. One of the primary rRNA binding proteins, it binds directly to 16S rRNA where it helps nucleate assembly of the platform of the 30S subunit by binding and bridging several RNA helices of the 16S rRNA. Forms an intersubunit bridge (bridge B4) with the 23S rRNA of the 50S subunit in the ribosome. This Campylobacter curvus (strain 525.92) protein is Small ribosomal subunit protein uS15.